The primary structure comprises 400 residues: Nicotinate phosphoribosyltransferase (400 aa).

Histidine 220 is modified (phosphohistidine; by autocatalysis).

This sequence belongs to the NAPRTase family. Post-translationally, transiently phosphorylated on a His residue during the reaction cycle. Phosphorylation strongly increases the affinity for substrates and increases the rate of nicotinate D-ribonucleotide production. Dephosphorylation regenerates the low-affinity form of the enzyme, leading to product release.

The catalysed reaction is nicotinate + 5-phospho-alpha-D-ribose 1-diphosphate + ATP + H2O = nicotinate beta-D-ribonucleotide + ADP + phosphate + diphosphate. The protein operates within cofactor biosynthesis; NAD(+) biosynthesis; nicotinate D-ribonucleotide from nicotinate: step 1/1. Its function is as follows. Catalyzes the synthesis of beta-nicotinate D-ribonucleotide from nicotinate and 5-phospho-D-ribose 1-phosphate at the expense of ATP. The protein is Nicotinate phosphoribosyltransferase of Escherichia coli (strain K12 / MC4100 / BW2952).